A 331-amino-acid chain; its full sequence is Protein-methionine-sulfoxide reductase catalytic subunit MsrP (331 aa).

Positions 1–54 (MLIKTDRWLRGDDIPASEITPQHLFDQRRRLLAAAALGAAGAALSPWAARRAFA) form a signal peptide, tat-type signal. Mo-molybdopterin-binding positions include asparagine 86, 89–90 (YE), cysteine 144, serine 179, asparagine 227, arginine 232, and 243–245 (SAK).

The protein belongs to the MsrP family. As to quaternary structure, heterodimer of a catalytic subunit (MsrP) and a heme-binding subunit (MsrQ). Mo-molybdopterin is required as a cofactor. Post-translationally, predicted to be exported by the Tat system. The position of the signal peptide cleavage has not been experimentally proven.

The protein resides in the periplasm. The enzyme catalyses L-methionyl-[protein] + a quinone + H2O = L-methionyl-(S)-S-oxide-[protein] + a quinol. It catalyses the reaction L-methionyl-[protein] + a quinone + H2O = L-methionyl-(R)-S-oxide-[protein] + a quinol. In terms of biological role, part of the MsrPQ system that repairs oxidized periplasmic proteins containing methionine sulfoxide residues (Met-O), using respiratory chain electrons. Thus protects these proteins from oxidative-stress damage caused by reactive species of oxygen and chlorine generated by the host defense mechanisms. MsrPQ is essential for the maintenance of envelope integrity under bleach stress, rescuing a wide series of structurally unrelated periplasmic proteins from methionine oxidation. The catalytic subunit MsrP is non-stereospecific, being able to reduce both (R-) and (S-) diastereoisomers of methionine sulfoxide. The sequence is that of Protein-methionine-sulfoxide reductase catalytic subunit MsrP from Ralstonia nicotianae (strain ATCC BAA-1114 / GMI1000) (Ralstonia solanacearum).